A 196-amino-acid polypeptide reads, in one-letter code: Holliday junction branch migration complex subunit RuvA (196 aa).

Residues 1-63 (MINKIHGKVI…ENELKLFGFL (63 aa)) form a domain I region. The tract at residues 64 to 139 (NSDERETFKS…KLLINNELES (76 aa)) is domain II. Residue S139 is a region of interest, flexible linker. The segment at 139-196 (SSLFGFKELEESIVSMGFDRKIVNSKLKEACDLIEFSNLKDSEKEQFLFKEVLKRMSN) is domain III.

The protein belongs to the RuvA family. In terms of assembly, homotetramer. Forms an RuvA(8)-RuvB(12)-Holliday junction (HJ) complex. HJ DNA is sandwiched between 2 RuvA tetramers; dsDNA enters through RuvA and exits via RuvB. An RuvB hexamer assembles on each DNA strand where it exits the tetramer. Each RuvB hexamer is contacted by two RuvA subunits (via domain III) on 2 adjacent RuvB subunits; this complex drives branch migration. In the full resolvosome a probable DNA-RuvA(4)-RuvB(12)-RuvC(2) complex forms which resolves the HJ.

Its subcellular location is the cytoplasm. Its function is as follows. The RuvA-RuvB-RuvC complex processes Holliday junction (HJ) DNA during genetic recombination and DNA repair, while the RuvA-RuvB complex plays an important role in the rescue of blocked DNA replication forks via replication fork reversal (RFR). RuvA specifically binds to HJ cruciform DNA, conferring on it an open structure. The RuvB hexamer acts as an ATP-dependent pump, pulling dsDNA into and through the RuvAB complex. HJ branch migration allows RuvC to scan DNA until it finds its consensus sequence, where it cleaves and resolves the cruciform DNA. The sequence is that of Holliday junction branch migration complex subunit RuvA from Borrelia garinii subsp. bavariensis (strain ATCC BAA-2496 / DSM 23469 / PBi) (Borreliella bavariensis).